The following is a 238-amino-acid chain: DNA N-6-adenine-methyltransferase (238 aa).

It belongs to the N(4)/N(6)-methyltransferase family.

The enzyme catalyses a 2'-deoxyadenosine in DNA + S-adenosyl-L-methionine = an N(6)-methyl-2'-deoxyadenosine in DNA + S-adenosyl-L-homocysteine + H(+). In terms of biological role, methyltransferase that methylates adenine residues in the dsDNA sequence 5'-GATC-3'. May prevent degradation of viral DNA by the host restriction-modification antiviral defense system. This Escherichia phage T1 (Bacteriophage T1) protein is DNA N-6-adenine-methyltransferase.